We begin with the raw amino-acid sequence, 487 residues long: GTPase Der (487 aa).

The disordered stretch occupies residues 1–20; it reads MAKAVRKSNSEETVPIKAPR. 2 consecutive EngA-type G domains span residues 28–197 and 225–401; these read PVVS…SSKP and FRLA…SRSR. GTP is bound by residues 34-41, 83-87, 149-152, 231-238, 278-282, and 343-346; these read GRQNVGKS, DTPGL, NKAD, GKPNSGKS, DTAGI, and NKWD. One can recognise a KH-like domain in the interval 402–486; sequence RKVSTSELNK…PVRLEFRSDR (85 aa).

It belongs to the TRAFAC class TrmE-Era-EngA-EngB-Septin-like GTPase superfamily. EngA (Der) GTPase family. Associates with the 50S ribosomal subunit.

GTPase that plays an essential role in the late steps of ribosome biogenesis. The polypeptide is GTPase Der (Leptospira borgpetersenii serovar Hardjo-bovis (strain L550)).